Here is a 240-residue protein sequence, read N- to C-terminus: Adapter protein MecA (240 aa).

Residues 119 to 132 (QRKQQKKNHQDKQQ) show a composition bias toward basic and acidic residues. Positions 119–138 (QRKQQKKNHQDKQQRRAHKP) are disordered.

Belongs to the MecA family. In terms of assembly, homodimer.

In terms of biological role, enables the recognition and targeting of unfolded and aggregated proteins to the ClpC protease or to other proteins involved in proteolysis. In Staphylococcus epidermidis (strain ATCC 35984 / DSM 28319 / BCRC 17069 / CCUG 31568 / BM 3577 / RP62A), this protein is Adapter protein MecA.